Consider the following 618-residue polypeptide: Nuclear RNA export factor 1 (618 aa).

The segment covering 1–15 (MADEGKSYNEHDDRV) has biased composition (basic and acidic residues). Residues 1–113 (MADEGKSYNE…RGGAGTSQDG (113 aa)) are disordered. The residue at position 2 (A2) is an N-acetylalanine. A minor non-specific RNA-binding region spans residues 2-59 (ADEGKSYNEHDDRVSFPQRRKKGRGPFRWKCGEGNRRSGRGGSGVQSSRFEEDDGDVA). The segment at 2-117 (ADEGKSYNEH…GTSQDGTTKN (116 aa)) is RNA-binding (RBD). Residues 2 to 197 (ADEGKSYNEH…IIINASAPPY (196 aa)) are interaction with ALYREF/THOC4 and LUZP4. The segment covering 19–28 (QRRKKGRGPF) has biased composition (basic residues). R41 is subject to Asymmetric dimethylarginine; alternate. Omega-N-methylarginine; alternate is present on R41. The segment at 60–117 (MNDPQDGPRVRYNPYTNRPNRRGDGWHDRDRIHITVRRDRAPAERGGAGTSQDGTTKN) is major non-specific RNA-binding. An RNA binding region spans residues 60–117 (MNDPQDGPRVRYNPYTNRPNRRGDGWHDRDRIHITVRRDRAPAERGGAGTSQDGTTKN). The Nuclear localization signal motif lies at 66–99 (GPRVRYNPYTNRPNRRGDGWHDRDRIHITVRRDR). Basic and acidic residues predominate over residues 80–102 (RRGDGWHDRDRIHITVRRDRAPA). A Nuclear export signal motif is present at residues 82–109 (GDGWHDRDRIHITVRRDRAPAERGGAGT). Residues 118 to 197 (WFKITIPYGR…IIINASAPPY (80 aa)) enclose the RRM domain. Y125 is modified (3'-nitrotyrosine). 4 LRR repeats span residues 265 to 290 (ELLSLNLSSNRLYKLDDMSSIVQKAP), 291 to 314 (NLKTLNLSGNELKTERELDKIKGL), 315 to 342 (KLEELWLDRNPMCDNFGDQSSYISAIRE), and 343 to 370 (RFPKLLRLDGHELPPPISFDVEAPTMLP). An NTF2 domain is found at 385–535 (LVLRFLQQYY…LCIVNDELFV (151 aa)). The TAP-C domain occupies 564 to 618 (PEQQEMLQAFSTQSGMNLEWSQKCLQDNNWDYTRSAQAFTLLKAKGEIPEVAFMK).

It belongs to the NXF family. In terms of assembly, heterodimer (via NTF2 domain) with NXT1. The formation of NXF1-NXT1 heterodimers is required for the NXF1-mediated nuclear mRNA export. Forms a complex with RANBP2/NUP358, NXT1 and RANGAP1. Associates with the exon junction complex (EJC). Associates with the transcription/export (TREX) complex. Found in a mRNA complex with UPF3A and UPF3B. Found in a post-splicing complex with RBM8A, UPF1, UPF2, UPF3A, UPF3B and RNPS1. Interacts (via N-terminus) with DHX9 (via N-terminus); this interaction is direct and negatively regulates NXF1-mediated nuclear export of constitutive transport element (CTE)-containing cellular mRNAs. Interacts with FYTTD1/UIF. Interacts with EIF4A3. Interacts with NUP42. Interacts with ALYREF/THOC4. Interacts with CHTOP. Interacts with FRG1 (via N-terminus). Interacts with LUZP4. Interacts with FMR1; the interaction occurs in a mRNA-dependent and polyribosomes-independent manner in the nucleus. Interacts with CPSF6 (via N-terminus); this interaction is direct. Interacts with RBM15. Interacts with RBM15B. Interacts with MCM3AP; this interaction is not mediated by RNA. Interacts with DDX3X (via C-terminus); this interaction may be partly involved in DDX3X nuclear export and in NXF1 localization to stress granules. Interacts with PABPC1/PABP1. Expressed ubiquitously.

Its subcellular location is the nucleus. It localises to the nucleoplasm. It is found in the nucleus speckle. The protein resides in the cytoplasm. The protein localises to the nuclear pore complex. Its subcellular location is the nucleus envelope. It localises to the stress granule. In terms of biological role, involved in the nuclear export of mRNA species bearing retroviral constitutive transport elements (CTE) and in the export of mRNA from the nucleus to the cytoplasm (TAP/NFX1 pathway). The NXF1-NXT1 heterodimer is involved in the export of HSP70 mRNA in conjunction with ALYREF/THOC4 and THOC5 components of the TREX complex. ALYREF/THOC4-bound mRNA is thought to be transferred to the NXF1-NXT1 heterodimer for export. Also involved in nuclear export of m6A-containing mRNAs: interaction between SRSF3 and YTHDC1 facilitates m6A-containing mRNA-binding to both SRSF3 and NXF1, promoting mRNA nuclear export. The chain is Nuclear RNA export factor 1 (Nxf1) from Mus musculus (Mouse).